We begin with the raw amino-acid sequence, 156 residues long: Small ribosomal subunit protein uS7 (156 aa).

It belongs to the universal ribosomal protein uS7 family. Part of the 30S ribosomal subunit. Contacts proteins S9 and S11.

One of the primary rRNA binding proteins, it binds directly to 16S rRNA where it nucleates assembly of the head domain of the 30S subunit. Is located at the subunit interface close to the decoding center, probably blocks exit of the E-site tRNA. This Cellvibrio japonicus (strain Ueda107) (Pseudomonas fluorescens subsp. cellulosa) protein is Small ribosomal subunit protein uS7.